The chain runs to 277 residues: Putative hydroxypyruvate isomerase (277 aa).

Catalysis depends on proton donor/acceptor residues glutamate 150 and glutamate 249.

Belongs to the hyi family.

The enzyme catalyses 3-hydroxypyruvate = 2-hydroxy-3-oxopropanoate. Catalyzes the reversible isomerization between hydroxypyruvate and 2-hydroxy-3-oxopropanoate (also termed tartronate semialdehyde). In Mus musculus (Mouse), this protein is Putative hydroxypyruvate isomerase (Hyi).